Consider the following 209-residue polypeptide: Uracil phosphoribosyltransferase (209 aa).

5-phospho-alpha-D-ribose 1-diphosphate contacts are provided by residues Arg-79, Arg-104, and 131 to 139 (DPMLATGGS). Residues Ile-194 and 199 to 201 (GDA) each bind uracil. Asp-200 lines the 5-phospho-alpha-D-ribose 1-diphosphate pocket.

It belongs to the UPRTase family. Mg(2+) is required as a cofactor.

It carries out the reaction UMP + diphosphate = 5-phospho-alpha-D-ribose 1-diphosphate + uracil. Its pathway is pyrimidine metabolism; UMP biosynthesis via salvage pathway; UMP from uracil: step 1/1. Its activity is regulated as follows. Allosterically activated by GTP. Catalyzes the conversion of uracil and 5-phospho-alpha-D-ribose 1-diphosphate (PRPP) to UMP and diphosphate. This is Uracil phosphoribosyltransferase from Pediococcus pentosaceus (strain ATCC 25745 / CCUG 21536 / LMG 10740 / 183-1w).